The sequence spans 286 residues: Homoserine kinase (286 aa).

An ATP-binding site is contributed by 78-88 (PVAHGLGSSSS).

The protein belongs to the GHMP kinase family. Homoserine kinase subfamily.

The protein resides in the cytoplasm. It carries out the reaction L-homoserine + ATP = O-phospho-L-homoserine + ADP + H(+). Its pathway is amino-acid biosynthesis; L-threonine biosynthesis; L-threonine from L-aspartate: step 4/5. Functionally, catalyzes the ATP-dependent phosphorylation of L-homoserine to L-homoserine phosphate. The sequence is that of Homoserine kinase from Limosilactobacillus fermentum (strain NBRC 3956 / LMG 18251) (Lactobacillus fermentum).